The sequence spans 336 residues: Dihydroorotate dehydrogenase (quinone) (336 aa).

Residues 62-66 (AGLDK) and Thr-86 contribute to the FMN site. A substrate-binding site is contributed by Lys-66. A substrate-binding site is contributed by 111 to 115 (NRMGF). The FMN site is built by Asn-139 and Asn-172. Asn-172 serves as a coordination point for substrate. The Nucleophile role is filled by Ser-175. Asn-177 is a substrate binding site. 2 residues coordinate FMN: Lys-217 and Thr-245. Residue 246-247 (NT) participates in substrate binding. Residues Gly-268, Gly-297, and 318–319 (YS) contribute to the FMN site.

It belongs to the dihydroorotate dehydrogenase family. Type 2 subfamily. As to quaternary structure, monomer. FMN serves as cofactor.

It localises to the cell membrane. It catalyses the reaction (S)-dihydroorotate + a quinone = orotate + a quinol. The protein operates within pyrimidine metabolism; UMP biosynthesis via de novo pathway; orotate from (S)-dihydroorotate (quinone route): step 1/1. Its function is as follows. Catalyzes the conversion of dihydroorotate to orotate with quinone as electron acceptor. The chain is Dihydroorotate dehydrogenase (quinone) from Sodalis glossinidius (strain morsitans).